The primary structure comprises 427 residues: 3-phosphoshikimate 1-carboxyvinyltransferase (427 aa).

3 residues coordinate 3-phosphoshikimate: Lys-22, Ser-23, and Arg-27. Residue Lys-22 participates in phosphoenolpyruvate binding. Gly-96 and Arg-124 together coordinate phosphoenolpyruvate. 7 residues coordinate 3-phosphoshikimate: Ser-169, Ser-170, Gln-171, Ser-197, Asp-313, Asn-336, and Lys-340. Gln-171 provides a ligand contact to phosphoenolpyruvate. Asp-313 functions as the Proton acceptor in the catalytic mechanism. Residues Arg-344, Arg-386, and Lys-411 each coordinate phosphoenolpyruvate.

It belongs to the EPSP synthase family. As to quaternary structure, monomer.

The protein localises to the cytoplasm. The enzyme catalyses 3-phosphoshikimate + phosphoenolpyruvate = 5-O-(1-carboxyvinyl)-3-phosphoshikimate + phosphate. It functions in the pathway metabolic intermediate biosynthesis; chorismate biosynthesis; chorismate from D-erythrose 4-phosphate and phosphoenolpyruvate: step 6/7. Its function is as follows. Catalyzes the transfer of the enolpyruvyl moiety of phosphoenolpyruvate (PEP) to the 5-hydroxyl of shikimate-3-phosphate (S3P) to produce enolpyruvyl shikimate-3-phosphate and inorganic phosphate. The polypeptide is 3-phosphoshikimate 1-carboxyvinyltransferase (Salmonella dublin (strain CT_02021853)).